The chain runs to 1057 residues: Atrial natriuretic peptide receptor 1 (1057 aa).

Residues 1–28 (MPGSRRVRPRLRALLLLPPLLLLRSGHA) form the signal peptide. Residues 29 to 469 (SDLTVAVVLP…CNQDHFSTLE (441 aa)) are Extracellular-facing. The N-linked (GlcNAc...) asparagine glycan is linked to asparagine 41. Serine 81, glycine 113, and cysteine 114 together coordinate chloride. Disulfide bonds link cysteine 88/cysteine 114 and cysteine 192/cysteine 241. Asparagine 208, asparagine 334, asparagine 375, asparagine 382, and asparagine 423 each carry an N-linked (GlcNAc...) asparagine glycan. The cysteines at positions 451 and 460 are disulfide-linked. The chain crosses the membrane as a helical span at residues 470–490 (VLALVGSLSLVSFLIVSFFIY). The Cytoplasmic segment spans residues 491–1057 (RKMQLEKELV…LGERGCSTRG (567 aa)). Residues serine 515 and serine 525 each carry the phosphoserine modification. The Protein kinase domain occupies 524–801 (GSRLTLSGRG…QIRLALRKFN (278 aa)). Phosphothreonine is present on threonine 528. Phosphoserine is present on residues serine 530, serine 534, and serine 538. The residue at position 541 (threonine 541) is a Phosphothreonine. The Guanylate cyclase domain maps to 872–1002 (TIYFSDIVGF…DTVNTASRME (131 aa)).

Belongs to the adenylyl cyclase class-4/guanylyl cyclase family. Homodimer. In terms of processing, phosphorylation of the protein kinase-like domain is required for full activation by ANP.

The protein resides in the membrane. The enzyme catalyses GTP = 3',5'-cyclic GMP + diphosphate. Functionally, receptor for the atrial natriuretic peptide NPPA/ANP and the brain natriuretic peptide NPPB/BNP which are potent vasoactive hormones playing a key role in cardiovascular homeostasis. Plays an essential role in the regulation of endothelial cell senescence and vascular aging. Upon activation by ANP or BNP, stimulates the production of cyclic guanosine monophosphate (cGMP) that promotes vascular tone and volume homeostasis by activation of protein kinase cGMP-dependent 1/PRKG1 and subsequently PRKAA1, thereby controlling blood pressure and maintaining cardiovascular homeostasis. This chain is Atrial natriuretic peptide receptor 1 (Npr1), found in Mus musculus (Mouse).